The chain runs to 88 residues: Small ribosomal subunit protein uS17 (88 aa).

It belongs to the universal ribosomal protein uS17 family. As to quaternary structure, part of the 30S ribosomal subunit.

In terms of biological role, one of the primary rRNA binding proteins, it binds specifically to the 5'-end of 16S ribosomal RNA. The polypeptide is Small ribosomal subunit protein uS17 (Pseudomonas fluorescens (strain ATCC BAA-477 / NRRL B-23932 / Pf-5)).